Consider the following 228-residue polypeptide: Deoxyribose-phosphate aldolase (228 aa).

The active-site Proton donor/acceptor is the aspartate 93. Residue lysine 159 is the Schiff-base intermediate with acetaldehyde of the active site. Lysine 188 acts as the Proton donor/acceptor in catalysis.

It belongs to the DeoC/FbaB aldolase family. DeoC type 1 subfamily.

It localises to the cytoplasm. The enzyme catalyses 2-deoxy-D-ribose 5-phosphate = D-glyceraldehyde 3-phosphate + acetaldehyde. It functions in the pathway carbohydrate degradation; 2-deoxy-D-ribose 1-phosphate degradation; D-glyceraldehyde 3-phosphate and acetaldehyde from 2-deoxy-alpha-D-ribose 1-phosphate: step 2/2. Functionally, catalyzes a reversible aldol reaction between acetaldehyde and D-glyceraldehyde 3-phosphate to generate 2-deoxy-D-ribose 5-phosphate. The sequence is that of Deoxyribose-phosphate aldolase from Carboxydothermus hydrogenoformans (strain ATCC BAA-161 / DSM 6008 / Z-2901).